The following is a 211-amino-acid chain: Uracil phosphoribosyltransferase (211 aa).

Residues Arg78, Arg103, and 130-138 (DPMLATGGT) each bind 5-phospho-alpha-D-ribose 1-diphosphate. Uracil is bound by residues Ile195 and 200–202 (GDA). Asp201 serves as a coordination point for 5-phospho-alpha-D-ribose 1-diphosphate.

This sequence belongs to the UPRTase family. Mg(2+) is required as a cofactor.

It catalyses the reaction UMP + diphosphate = 5-phospho-alpha-D-ribose 1-diphosphate + uracil. It functions in the pathway pyrimidine metabolism; UMP biosynthesis via salvage pathway; UMP from uracil: step 1/1. Allosterically activated by GTP. Catalyzes the conversion of uracil and 5-phospho-alpha-D-ribose 1-diphosphate (PRPP) to UMP and diphosphate. The chain is Uracil phosphoribosyltransferase from Arthrobacter sp. (strain FB24).